The chain runs to 186 residues: MSDSNKEKKKKFADMVSKRKGDDQEDQQTGDLSEELNILKERAVQLEDHLRRAVADNENVKRIMQKQISDASDYAVTKFARDMIDSCDNLKKAMENLKDGDPIHEGIKVAHQKIVSDLKKHGIEEIDPIGNSFDSNLHQAVVEREDNEKEPGTIVEVLQTGYTIKNRLLRPAMVILSKKSADCESN.

Residues 1–22 (MSDSNKEKKKKFADMVSKRKGD) show a composition bias toward basic and acidic residues. Residues 1–35 (MSDSNKEKKKKFADMVSKRKGDDQEDQQTGDLSEE) form a disordered region. Residues 23–34 (DQEDQQTGDLSE) show a composition bias toward acidic residues.

It belongs to the GrpE family. Homodimer.

It is found in the cytoplasm. Participates actively in the response to hyperosmotic and heat shock by preventing the aggregation of stress-denatured proteins, in association with DnaK and GrpE. It is the nucleotide exchange factor for DnaK and may function as a thermosensor. Unfolded proteins bind initially to DnaJ; upon interaction with the DnaJ-bound protein, DnaK hydrolyzes its bound ATP, resulting in the formation of a stable complex. GrpE releases ADP from DnaK; ATP binding to DnaK triggers the release of the substrate protein, thus completing the reaction cycle. Several rounds of ATP-dependent interactions between DnaJ, DnaK and GrpE are required for fully efficient folding. This is Protein GrpE from Wolbachia pipientis subsp. Culex pipiens (strain wPip).